Consider the following 326-residue polypeptide: MTETDTWHWDQPQIHALFELPLPELLFRAQEVHRRHFNPGQVQACTLVSIKTGACAEDCTYCSQSARYDTGLEREALIDVETVREAAQRARASGATRLCMGAAWRGPKDRDLETLVAMVRAVKAEGLEACLSAGLLAEGQAERLAEAGLDYFNHNLDTSPSYYDQVVTTRSYEQRLQTLERIRDAGMRVCCGGIVGLGEARADRVEMLATLANLPVPPQSVPINRLIPIPGTPLEAAEPVDPFEIVRTIAATRLVLPRSYVRLAAGREQMSDELQALCLSAGANSLFLGERLLTTDNPDADADHRLLHRLGMTLEPRTHSCAELEP.

The 225-residue stretch at Gly40–Ala264 folds into the Radical SAM core domain. Positions 55, 59, and 62 each coordinate [4Fe-4S] cluster. Residues Cys99, Cys130, Cys190, and Arg262 each contribute to the [2Fe-2S] cluster site.

The protein belongs to the radical SAM superfamily. Biotin synthase family. As to quaternary structure, homodimer. It depends on [4Fe-4S] cluster as a cofactor. [2Fe-2S] cluster serves as cofactor.

The catalysed reaction is (4R,5S)-dethiobiotin + (sulfur carrier)-SH + 2 reduced [2Fe-2S]-[ferredoxin] + 2 S-adenosyl-L-methionine = (sulfur carrier)-H + biotin + 2 5'-deoxyadenosine + 2 L-methionine + 2 oxidized [2Fe-2S]-[ferredoxin]. The protein operates within cofactor biosynthesis; biotin biosynthesis; biotin from 7,8-diaminononanoate: step 2/2. In terms of biological role, catalyzes the conversion of dethiobiotin (DTB) to biotin by the insertion of a sulfur atom into dethiobiotin via a radical-based mechanism. This chain is Biotin synthase, found in Halorhodospira halophila (strain DSM 244 / SL1) (Ectothiorhodospira halophila (strain DSM 244 / SL1)).